A 128-amino-acid chain; its full sequence is Cytochrome c-type biogenesis protein CcmE (128 aa).

The Cytoplasmic segment spans residues 1–8 (MQKRVRNR). The chain crosses the membrane as a helical; Signal-anchor for type II membrane protein span at residues 9-29 (LITIIICFCSAFLGIGIILYN). The Periplasmic portion of the chain corresponds to 30 to 128 (LENNIVFFLP…KHDENYRPTR (99 aa)). 2 residues coordinate heme: His-120 and Tyr-124.

The protein belongs to the CcmE/CycJ family.

The protein resides in the cell inner membrane. Heme chaperone required for the biogenesis of c-type cytochromes. Transiently binds heme delivered by CcmC and transfers the heme to apo-cytochromes in a process facilitated by CcmF and CcmH. The protein is Cytochrome c-type biogenesis protein CcmE of Rickettsia canadensis (strain McKiel).